A 507-amino-acid polypeptide reads, in one-letter code: Sperm-associated antigen 6 (507 aa).

8 ARM repeats span residues 31 to 70 (PQNIETLQNAGVMSLLRPLLLDVVPTIQQTAALALGRLAN), 73 to 112 (DDLAEAVVKGDILPQLVYSLAEQNRFYKKAAAFVLRAVGK), 115 to 154 (PQLAQAIVDCGALDTLVICLEDFDPGVKEAAAWALGYIAR), 157 to 196 (TELSQAVVDAGAIPLLVLCIQEPEIALKRIAASALSDISK), 199 to 238 (PELAQTVVDAGAIAHLAQMILNPDAKLKRQVLSALSQIAK), 241 to 280 (VDLAEMVVEAEIFPVVLTCLKDKDEYVKKNACTLIREIAK), 325 to 365 (ENLA…QLGR), and 402 to 441 (KAIKNILQKCTYLPALEPFLYDAPPNILKHVVGQFSKVLP).

As to quaternary structure, interacts with SPAG16 and SPAG17. Highly expressed in testis. Not detected in prostate, ovary, spleen, thymus, small intestine, colon and peripheral blood leukocytes.

It is found in the cytoplasm. The protein resides in the cytoskeleton. It localises to the cell projection. Its subcellular location is the cilium. The protein localises to the flagellum. It is found in the cilium axoneme. In terms of biological role, important for structural integrity of the central apparatus in the sperm tail and for flagellar motility. The protein is Sperm-associated antigen 6 (Spag6) of Mus musculus (Mouse).